Consider the following 273-residue polypeptide: Tetraspanin-8 (273 aa).

The Cytoplasmic segment spans residues 1–7 (MARCSNN). Residues 8–28 (LVGILNFLVFLLSIPILAGGI) traverse the membrane as a helical segment. Residues 29 to 45 (WLSQKGSTECERFLDKP) lie on the Extracellular side of the membrane. Residues 46-66 (VIALGVFLMVVAIAGLIGSCC) traverse the membrane as a helical segment. At 67–75 (RVTWLLWVY) the chain is on the cytoplasmic side. A helical membrane pass occupies residues 76–96 (LFVMFLLILLVFCITVFAFVV). The Extracellular portion of the chain corresponds to 97-235 (TNKGAGEAIE…NVKSAWKKVA (139 aa)). An N-linked (GlcNAc...) asparagine glycan is attached at Asn-192. The chain crosses the membrane as a helical span at residues 236 to 256 (IVNIVFLVFLIIVYSVGCCAF). The Cytoplasmic segment spans residues 257-273 (RNNKRDDSYSRTYGYKP).

It belongs to the tetraspanin (TM4SF) family.

It is found in the membrane. In terms of biological role, may be involved in the regulation of cell differentiation. This chain is Tetraspanin-8 (TET8), found in Arabidopsis thaliana (Mouse-ear cress).